Reading from the N-terminus, the 288-residue chain is Phosphatidylserine decarboxylase proenzyme (288 aa).

Catalysis depends on charge relay system; for autoendoproteolytic cleavage activity residues aspartate 91, histidine 148, and serine 254. Serine 254 acts as the Schiff-base intermediate with substrate; via pyruvic acid; for decarboxylase activity in catalysis. Serine 254 is modified (pyruvic acid (Ser); by autocatalysis).

It belongs to the phosphatidylserine decarboxylase family. PSD-B subfamily. Prokaryotic type I sub-subfamily. In terms of assembly, heterodimer of a large membrane-associated beta subunit and a small pyruvoyl-containing alpha subunit. Pyruvate is required as a cofactor. Is synthesized initially as an inactive proenzyme. Formation of the active enzyme involves a self-maturation process in which the active site pyruvoyl group is generated from an internal serine residue via an autocatalytic post-translational modification. Two non-identical subunits are generated from the proenzyme in this reaction, and the pyruvate is formed at the N-terminus of the alpha chain, which is derived from the carboxyl end of the proenzyme. The autoendoproteolytic cleavage occurs by a canonical serine protease mechanism, in which the side chain hydroxyl group of the serine supplies its oxygen atom to form the C-terminus of the beta chain, while the remainder of the serine residue undergoes an oxidative deamination to produce ammonia and the pyruvoyl prosthetic group on the alpha chain. During this reaction, the Ser that is part of the protease active site of the proenzyme becomes the pyruvoyl prosthetic group, which constitutes an essential element of the active site of the mature decarboxylase.

It localises to the cell membrane. It carries out the reaction a 1,2-diacyl-sn-glycero-3-phospho-L-serine + H(+) = a 1,2-diacyl-sn-glycero-3-phosphoethanolamine + CO2. It functions in the pathway phospholipid metabolism; phosphatidylethanolamine biosynthesis; phosphatidylethanolamine from CDP-diacylglycerol: step 2/2. Catalyzes the formation of phosphatidylethanolamine (PtdEtn) from phosphatidylserine (PtdSer). In Pseudoalteromonas translucida (strain TAC 125), this protein is Phosphatidylserine decarboxylase proenzyme.